Reading from the N-terminus, the 337-residue chain is Ketol-acid reductoisomerase (NAD(P)(+)) (337 aa).

Positions 2–187 constitute a KARI N-terminal Rossmann domain; it reads ARMFYDADAN…GCTRAGVIET (186 aa). NADP(+) contacts are provided by residues 25-28, Arg-48, and 88-91; these read FGSQ and DEVQ. Residue His-113 is part of the active site. Position 139 (Gly-139) interacts with NADP(+). The KARI C-terminal knotted domain occupies 188-333; it reads SFQEETETDL…AELRGMMPWL (146 aa). Residues Asp-196, Glu-200, Glu-232, and Glu-236 each contribute to the Mg(2+) site. Residue Ser-257 participates in substrate binding.

This sequence belongs to the ketol-acid reductoisomerase family. Mg(2+) is required as a cofactor.

The enzyme catalyses (2R)-2,3-dihydroxy-3-methylbutanoate + NAD(+) = (2S)-2-acetolactate + NADH + H(+). It catalyses the reaction (2R)-2,3-dihydroxy-3-methylbutanoate + NADP(+) = (2S)-2-acetolactate + NADPH + H(+). Its pathway is amino-acid biosynthesis; L-isoleucine biosynthesis; L-isoleucine from 2-oxobutanoate: step 2/4. It participates in amino-acid biosynthesis; L-valine biosynthesis; L-valine from pyruvate: step 2/4. Involved in the biosynthesis of branched-chain amino acids (BCAA). Catalyzes an alkyl-migration followed by a ketol-acid reduction of (S)-2-acetolactate (S2AL) to yield (R)-2,3-dihydroxy-isovalerate. In the isomerase reaction, S2AL is rearranged via a Mg-dependent methyl migration to produce 3-hydroxy-3-methyl-2-ketobutyrate (HMKB). In the reductase reaction, this 2-ketoacid undergoes a metal-dependent reduction by NADPH or NADH to yield (R)-2,3-dihydroxy-isovalerate. The chain is Ketol-acid reductoisomerase (NAD(P)(+)) from Syntrophomonas wolfei subsp. wolfei (strain DSM 2245B / Goettingen).